Consider the following 215-residue polypeptide: Pyrrolidone-carboxylate peptidase (215 aa).

Residues Glu-78, Cys-141, and His-165 contribute to the active site.

The protein belongs to the peptidase C15 family. Homotetramer.

The protein localises to the cytoplasm. The enzyme catalyses Release of an N-terminal pyroglutamyl group from a polypeptide, the second amino acid generally not being Pro.. Its function is as follows. Removes 5-oxoproline from various penultimate amino acid residues except L-proline. The polypeptide is Pyrrolidone-carboxylate peptidase (Streptococcus pyogenes serotype M18 (strain MGAS8232)).